Reading from the N-terminus, the 758-residue chain is 5-methyltetrahydropteroyltriglutamate--homocysteine methyltransferase (758 aa).

5-methyltetrahydropteroyltri-L-glutamate contacts are provided by residues Arg-17–Lys-20 and Lys-110. Residues Ile-428 to Ser-430 and Glu-481 contribute to the L-homocysteine site. L-methionine is bound by residues Ile-428–Ser-430 and Glu-481. 5-methyltetrahydropteroyltri-L-glutamate contacts are provided by residues Arg-512–Cys-513 and Trp-558. Asp-596 serves as a coordination point for L-homocysteine. Asp-596 serves as a coordination point for L-methionine. A 5-methyltetrahydropteroyltri-L-glutamate-binding site is contributed by Glu-602. Residues His-638, Cys-640, and Glu-662 each coordinate Zn(2+). The Proton donor role is filled by His-691. Cys-723 lines the Zn(2+) pocket.

The protein belongs to the vitamin-B12 independent methionine synthase family. Zn(2+) is required as a cofactor.

The enzyme catalyses 5-methyltetrahydropteroyltri-L-glutamate + L-homocysteine = tetrahydropteroyltri-L-glutamate + L-methionine. Its pathway is amino-acid biosynthesis; L-methionine biosynthesis via de novo pathway; L-methionine from L-homocysteine (MetE route): step 1/1. Its function is as follows. Catalyzes the transfer of a methyl group from 5-methyltetrahydrofolate to homocysteine resulting in methionine formation. This is 5-methyltetrahydropteroyltriglutamate--homocysteine methyltransferase from Thermosynechococcus vestitus (strain NIES-2133 / IAM M-273 / BP-1).